Reading from the N-terminus, the 501-residue chain is Probable cytochrome P450 6t3 (501 aa).

Cys-444 is a binding site for heme.

The protein belongs to the cytochrome P450 family. Heme serves as cofactor.

It is found in the endoplasmic reticulum membrane. The protein localises to the microsome membrane. In terms of biological role, may be involved in the metabolism of insect hormones and in the breakdown of synthetic insecticides. This chain is Probable cytochrome P450 6t3 (Cyp6t3), found in Drosophila melanogaster (Fruit fly).